A 137-amino-acid polypeptide reads, in one-letter code: Large ribosomal subunit protein uL16 (137 aa).

Basic residues predominate over residues 1–21; it reads MLSPKKVKFRKRQKGRLKGKA. The disordered stretch occupies residues 1-22; that stretch reads MLSPKKVKFRKRQKGRLKGKAQ.

It belongs to the universal ribosomal protein uL16 family. In terms of assembly, part of the 50S ribosomal subunit.

Binds 23S rRNA and is also seen to make contacts with the A and possibly P site tRNAs. The polypeptide is Large ribosomal subunit protein uL16 (Maridesulfovibrio salexigens (strain ATCC 14822 / DSM 2638 / NCIMB 8403 / VKM B-1763) (Desulfovibrio salexigens)).